Consider the following 251-residue polypeptide: Probable phosphatase Sputcn32_1369 (251 aa).

The Zn(2+) site is built by H8, H10, H16, H41, E74, H102, H132, D193, and H195.

Belongs to the PHP family. Requires Zn(2+) as cofactor.

This chain is Probable phosphatase Sputcn32_1369, found in Shewanella putrefaciens (strain CN-32 / ATCC BAA-453).